Consider the following 817-residue polypeptide: DNA-directed RNA polymerase subunit beta'' (817 aa).

Zn(2+) contacts are provided by C219, C291, C298, and C301.

Belongs to the RNA polymerase beta' chain family. RpoC2 subfamily. In plastids the minimal PEP RNA polymerase catalytic core is composed of four subunits: alpha, beta, beta', and beta''. When a (nuclear-encoded) sigma factor is associated with the core the holoenzyme is formed, which can initiate transcription. It depends on Zn(2+) as a cofactor.

It is found in the plastid. It carries out the reaction RNA(n) + a ribonucleoside 5'-triphosphate = RNA(n+1) + diphosphate. In terms of biological role, DNA-dependent RNA polymerase catalyzes the transcription of DNA into RNA using the four ribonucleoside triphosphates as substrates. This Euglena longa (Euglenophycean alga) protein is DNA-directed RNA polymerase subunit beta'' (rpoC2).